The chain runs to 103 residues: Large ribosomal subunit protein bL21 (103 aa).

The protein belongs to the bacterial ribosomal protein bL21 family. As to quaternary structure, part of the 50S ribosomal subunit. Contacts protein L20.

This protein binds to 23S rRNA in the presence of protein L20. The polypeptide is Large ribosomal subunit protein bL21 (Shewanella pealeana (strain ATCC 700345 / ANG-SQ1)).